The sequence spans 411 residues: Probable glutamate dehydrogenase 3 (411 aa).

K102 is a catalytic residue.

The protein belongs to the Glu/Leu/Phe/Val dehydrogenases family.

It catalyses the reaction L-glutamate + NAD(+) + H2O = 2-oxoglutarate + NH4(+) + NADH + H(+). The enzyme catalyses L-glutamate + NADP(+) + H2O = 2-oxoglutarate + NH4(+) + NADPH + H(+). The polypeptide is Probable glutamate dehydrogenase 3 (GSH3) (Arabidopsis thaliana (Mouse-ear cress)).